The following is a 137-amino-acid chain: uncharacterized protein (137 aa).

2 consecutive transmembrane segments (helical) span residues 26–42 (CSLC…FFAM) and 52–69 (ASIP…GSIL).

The protein localises to the membrane. This is an uncharacterized protein from Saccharomyces cerevisiae (strain ATCC 204508 / S288c) (Baker's yeast).